We begin with the raw amino-acid sequence, 303 residues long: Glycine--tRNA ligase alpha subunit (303 aa).

Belongs to the class-II aminoacyl-tRNA synthetase family. Tetramer of two alpha and two beta subunits.

The protein localises to the cytoplasm. The catalysed reaction is tRNA(Gly) + glycine + ATP = glycyl-tRNA(Gly) + AMP + diphosphate. In Escherichia coli (strain K12), this protein is Glycine--tRNA ligase alpha subunit (glyQ).